A 111-amino-acid polypeptide reads, in one-letter code: uncharacterized protein (111 aa).

3 helical membrane passes run 4-23 (LHQV…LGHV), 39-61 (IYLG…VLSA), and 65-84 (SGIQ…EAVL).

Its subcellular location is the cell membrane. This is an uncharacterized protein from Bacillus subtilis (strain 168).